A 1060-amino-acid polypeptide reads, in one-letter code: DNA-directed RNA polymerase subunit beta (1060 aa).

This sequence belongs to the RNA polymerase beta chain family. As to quaternary structure, in plastids the minimal PEP RNA polymerase catalytic core is composed of four subunits: alpha, beta, beta', and beta''. When a (nuclear-encoded) sigma factor is associated with the core the holoenzyme is formed, which can initiate transcription.

It localises to the plastid. It is found in the chloroplast. The catalysed reaction is RNA(n) + a ribonucleoside 5'-triphosphate = RNA(n+1) + diphosphate. Functionally, DNA-dependent RNA polymerase catalyzes the transcription of DNA into RNA using the four ribonucleoside triphosphates as substrates. In Lactuca sativa (Garden lettuce), this protein is DNA-directed RNA polymerase subunit beta.